The sequence spans 278 residues: Phosphatidylglycerol--prolipoprotein diacylglyceryl transferase (278 aa).

3 helical membrane passes run 21–41 (WYGI…QASV), 54–74 (IIFW…VIFQ), and 88–108 (IWQG…TGII). Arginine 136 serves as a coordination point for a 1,2-diacyl-sn-glycero-3-phospho-(1'-sn-glycerol). The next 3 helical transmembrane spans lie at 176 to 196 (QPTF…LILL), 202 to 222 (IGDT…FVEG), and 234 to 254 (IRIA…IMIV).

It belongs to the Lgt family.

The protein localises to the cell membrane. It catalyses the reaction L-cysteinyl-[prolipoprotein] + a 1,2-diacyl-sn-glycero-3-phospho-(1'-sn-glycerol) = an S-1,2-diacyl-sn-glyceryl-L-cysteinyl-[prolipoprotein] + sn-glycerol 1-phosphate + H(+). Its pathway is protein modification; lipoprotein biosynthesis (diacylglyceryl transfer). Its function is as follows. Catalyzes the transfer of the diacylglyceryl group from phosphatidylglycerol to the sulfhydryl group of the N-terminal cysteine of a prolipoprotein, the first step in the formation of mature lipoproteins. The polypeptide is Phosphatidylglycerol--prolipoprotein diacylglyceryl transferase (Staphylococcus saprophyticus subsp. saprophyticus (strain ATCC 15305 / DSM 20229 / NCIMB 8711 / NCTC 7292 / S-41)).